The primary structure comprises 361 residues: Arginine N(omega)-methyltransferase (361 aa).

The segment covering 1 to 17 (MRHVQEARAVPAEHEAR) has biased composition (basic and acidic residues). Residues 1-24 (MRHVQEARAVPAEHEARPAPVTMP) are disordered. The SAM-dependent MTase PRMT-type domain occupies 65 to 361 (DADAFAQIAR…WSDFTLRVSI (297 aa)).

It belongs to the class I-like SAM-binding methyltransferase superfamily. Protein arginine N-methyltransferase family.

The enzyme catalyses L-arginine + S-adenosyl-L-methionine = N(omega)-methyl-L-arginine + S-adenosyl-L-homocysteine + H(+). It functions in the pathway antibiotic biosynthesis. Functionally, involved in the biosynthesis of the glucosamine-nitrosourea antibiotic streptozotocin (SZN). Catalyzes the conversion of L-arginine to N(omega)-methyl-L-arginine (L-NMA), using S-adenosyl-L-methionine (SAM) as a methyl donor. The polypeptide is Arginine N(omega)-methyltransferase (Streptomyces achromogenes subsp. streptozoticus).